The sequence spans 463 residues: tRNA-2-methylthio-N(6)-dimethylallyladenosine synthase (463 aa).

The MTTase N-terminal domain maps to 19 to 135; it reads RSYWITTFGC…LENLLGKVDL (117 aa). The [4Fe-4S] cluster site is built by Cys-28, Cys-64, Cys-98, Cys-170, Cys-174, and Cys-177. The 238-residue stretch at 156 to 393 folds into the Radical SAM core domain; that stretch reads RESSICGWVN…NALVEKTARN (238 aa). The TRAM domain maps to 396 to 463; sequence QRYINNIESV…RPFSLTGELC (68 aa).

Belongs to the methylthiotransferase family. MiaB subfamily. Monomer. The cofactor is [4Fe-4S] cluster.

It is found in the cytoplasm. It carries out the reaction N(6)-dimethylallyladenosine(37) in tRNA + (sulfur carrier)-SH + AH2 + 2 S-adenosyl-L-methionine = 2-methylsulfanyl-N(6)-dimethylallyladenosine(37) in tRNA + (sulfur carrier)-H + 5'-deoxyadenosine + L-methionine + A + S-adenosyl-L-homocysteine + 2 H(+). Functionally, catalyzes the methylthiolation of N6-(dimethylallyl)adenosine (i(6)A), leading to the formation of 2-methylthio-N6-(dimethylallyl)adenosine (ms(2)i(6)A) at position 37 in tRNAs that read codons beginning with uridine. This Prochlorococcus marinus (strain MIT 9312) protein is tRNA-2-methylthio-N(6)-dimethylallyladenosine synthase.